Here is a 113-residue protein sequence, read N- to C-terminus: MENFLQQLKTLSSAEDFMQYFGVPFDQKVMNISRLHILKRFFQYLRQETPLAQTDELQMFTAYRALLTKAYGDFVTSTPAQEKVFKVFQDTDGKQHVTLDSLRASMPQRAAAA.

Belongs to the NifW family. As to quaternary structure, homotrimer; associates with NifD.

Functionally, may protect the nitrogenase Fe-Mo protein from oxidative damage. The chain is Nitrogenase-stabilizing/protective protein NifW from Polaromonas naphthalenivorans (strain CJ2).